Consider the following 195-residue polypeptide: UPF0301 protein Bpro_1142 (195 aa).

It belongs to the UPF0301 (AlgH) family.

The sequence is that of UPF0301 protein Bpro_1142 from Polaromonas sp. (strain JS666 / ATCC BAA-500).